Reading from the N-terminus, the 126-residue chain is Protein HEAT-INDUCED TAS1 TARGET 3 (126 aa).

This sequence belongs to the heat induced plant HTT protein family. In terms of tissue distribution, expressed in seedlings, leaves, stems, inflorescences and siliques.

Its subcellular location is the cytoplasm. The protein localises to the nucleus. Its function is as follows. Mediates both basal and acquired thermotolerance. This is Protein HEAT-INDUCED TAS1 TARGET 3 from Arabidopsis thaliana (Mouse-ear cress).